A 371-amino-acid polypeptide reads, in one-letter code: MPDYLQQYFTLDNIIQIGISLAILLVFLILRKLFTRYFFNLLFNLTNRPKTEIFKQVVLAFDKPARWFFVALGLFLAIRYSPFLDEQMPVISKIYRSLIVALLCWGLCNLTATSSFIFHKVNQRFELDMDDILAPFLSKLLRFVIIALSVSVIAQEFNYDVNGFVAGLGLGGLAFALAAKDTISNFFGGIIIITEKPFTIGDWVETSTVTGSVEDITFRSTRFRTAQGALVTVPNSTLSMEAITNWTRMTKRQITFSIHVSYATPIENLERSIHSLRTMLLEHEGVDNEIIMVNFDTFADSYYNLFFNFYTKTTVWAENLNIREDINYKIIEILGAEGVQFAYPGQMVVVKQKHESDQFQVNLNKEEKERA.

A run of 7 helical transmembrane segments spans residues Phe-9–Ile-29, Val-58–Ile-78, Leu-98–Phe-118, Leu-133–Ile-153, Tyr-159–Ala-179, Ile-183–Trp-203, and Ile-330–Val-350.

The protein belongs to the MscS (TC 1.A.23) family.

It is found in the cell membrane. In terms of biological role, may play a role in resistance to osmotic downshock. This is an uncharacterized protein from Bacillus subtilis (strain 168).